The chain runs to 951 residues: Protein inturned (951 aa).

Disordered regions lie at residues 1 to 32 (MEHS…FSSS), 189 to 208 (SSRN…NQRL), and 687 to 765 (TPKR…GGSG). A PDZ domain is found at 187 to 269 (HQSSRNSKRS…PMQLKLTFET (83 aa)). Residues 715 to 726 (PTRSSGGSDSGT) are compositionally biased toward low complexity. Positions 743–752 (MARKFGRRES) are enriched in basic and acidic residues. Over residues 754–765 (GSGGSDGSGGSG) the composition is skewed to gly residues.

Belongs to the inturned family. In terms of assembly, interacts with fuz and wdpcp; fuz, intu and wdpcp probably form the core CPLANE (ciliogenesis and planar polarity effectors) complex. In terms of tissue distribution, expressed in the neural plate during neural tube closure with subsequent strong expression in the ventral neural tube and in facial mesenchyme.

The protein resides in the cell surface. It localises to the cell membrane. It is found in the cytoplasm. Its subcellular location is the cytoskeleton. The protein localises to the cilium basal body. Its function is as follows. Plays a role in the definition of cell polarity via the planar cell polarity (PCP) cascade. Required for ciliogenesis by controlling the organization of the apical actin cytoskeleton and the positioning of the basal bodies at the apical cell surface, which in turn is essential for the normal orientation of elongating ciliary microtubules. Proposed to function as core component of a functional module called CPLANE (ciliogenesis and planar polarity effectors) involved in recruitment of peripheral IFT-A proteins to basal bodies. Controls the localization of both rhoa and disheveled in multi-ciliated cells. Has an indirect effect on hedgehog signaling. In Xenopus laevis (African clawed frog), this protein is Protein inturned.